Consider the following 231-residue polypeptide: uncharacterized protein (231 aa).

The next 4 membrane-spanning stretches (helical) occupy residues 39-59, 70-90, 156-176, and 189-206; these read FCISVISFFLLAIITLTYGPF, ALSLYFINVIMGVTYLSVPVI, AIISILCLSYSAICIVNGGSI, and IVAIMFFILYTSLMNMFF.

Belongs to the FliR/MopE/SpaR family.

The protein resides in the cell membrane. This is an uncharacterized protein from Escherichia coli (strain K12).